Here is a 509-residue protein sequence, read N- to C-terminus: Poly(A) RNA polymerase GLD2-B (509 aa).

A disordered region spans residues 88–125 (PGSPPSSFQNRKRRSDEGNSPYDVKRQRFQSPQEQTVN). Residues 116–125 (FQSPQEQTVN) are compositionally biased toward polar residues. Mg(2+)-binding residues include aspartate 240 and aspartate 242. Residues 409 to 462 (LGDLLLGFLKYFAVEFDWSKDIISLREAKALPRTDDYEWRNKYICVEEPFDGSN) enclose the PAP-associated domain.

Belongs to the DNA polymerase type-B-like family. GLD2 subfamily. In terms of assembly, component of a complex at least composed of cpeb1, cpsf1, tent2/gld2, pabpc1/ePAB, parn and sympk. Following oocyte maturation, parn is expelled from the complex. Interacts with rbfox2. Interacts with sympk. It depends on Mg(2+) as a cofactor. The cofactor is Mn(2+).

The protein localises to the cytoplasm. The enzyme catalyses RNA(n) + ATP = RNA(n)-3'-adenine ribonucleotide + diphosphate. Cytoplasmic poly(A) RNA polymerase that adds successive AMP monomers to the 3'-end of specific RNAs, forming a poly(A) tail. In contrast to the canonical nuclear poly(A) RNA polymerase, it only adds poly(A) to selected cytoplasmic mRNAs during oocyte maturation. Plays a central role during oocyte maturation by mediating polyadenylation of dormant mRNAs, which contain 5'AAUAAA-3' sequence in their 3'-UTR. In immature oocytes, polyadenylation of poly(A) tails is counteracted by the ribonuclease parn. During maturation parn is excluded from the ribonucleoprotein complex, allowing poly(A) elongation and activation of mRNAs. May not play a role in replication-dependent histone mRNA degradation. This is Poly(A) RNA polymerase GLD2-B from Xenopus laevis (African clawed frog).